The sequence spans 1046 residues: Arrestin-related trafficking adapter 3 (1046 aa).

Residues Tyr-115–Phe-141 form a disordered region. Positions Ala-128–Asn-140 are enriched in low complexity. Phosphoserine is present on residues Ser-155 and Ser-162. Low complexity-rich tracts occupy residues Ser-168 to Gly-179 and Arg-198 to Arg-210. The segment at Ser-168 to Asn-230 is disordered. Residues Ser-213 and Ser-586 each carry the phosphoserine modification. Over residues Thr-605–Asn-614 the composition is skewed to polar residues. Disordered stretches follow at residues Thr-605 to Ser-627 and Pro-651 to Ser-820. Residues Phe-669–Ser-694 show a composition bias toward low complexity. A compositionally biased stretch (basic and acidic residues) spans Lys-734–Asp-785. The span at Leu-802–Ser-811 shows a compositional bias: low complexity. Phosphoserine occurs at positions 826 and 838. The disordered stretch occupies residues Asn-868–Arg-889. The span at His-877–Arg-889 shows a compositional bias: polar residues. Residue Ser-900 is modified to Phosphoserine. The segment at Gln-986 to Phe-1017 is disordered. Residues Asp-996–Ser-1008 are compositionally biased toward polar residues. Ser-1022 and Ser-1023 each carry phosphoserine.

It belongs to the ALY1 family. In terms of assembly, interacts with PCL6, PCL7 and RSP5. In terms of processing, ubiquitinated by RSP5. Post-translationally, phosphorylated by the cyclin-CDKs PCL6-PHO85 and PCL7-PHO85.

The protein localises to the cytoplasm. May regulate endocytosis by recruiting RSP5 ubiquitin ligase activity to specific plasma membrane proteins in response to extracellular stimuli. This chain is Arrestin-related trafficking adapter 3 (ALY2), found in Saccharomyces cerevisiae (strain ATCC 204508 / S288c) (Baker's yeast).